A 61-amino-acid chain; its full sequence is Adipokinetic prohormone type 2 (61 aa).

A signal peptide spans 1-22 (MTQSCTLTLVLVVAVLAALATA). Q23 carries the pyrrolidone carboxylic acid modification. W30 bears the Tryptophan amide mark.

The protein belongs to the AKH/HRTH/RPCH family. In terms of assembly, adipokinetic hormone precursor-related peptide (APRP) can form three type of disulfide-bond dimers: p1 (alpha-alpha), p2 (alpha-beta), and p3 (beta-beta).

It is found in the secreted. Its function is as follows. This hormone, released from cells in the corpora cardiaca, causes release of diglycerides from the fat body and stimulation of muscles to use these diglycerides as an energy source during energy-demanding processes. This Locusta migratoria (Migratory locust) protein is Adipokinetic prohormone type 2.